Consider the following 305-residue polypeptide: Methionyl-tRNA formyltransferase (305 aa).

108 to 111 (SLLP) is a binding site for (6S)-5,6,7,8-tetrahydrofolate.

It belongs to the Fmt family.

It catalyses the reaction L-methionyl-tRNA(fMet) + (6R)-10-formyltetrahydrofolate = N-formyl-L-methionyl-tRNA(fMet) + (6S)-5,6,7,8-tetrahydrofolate + H(+). In terms of biological role, attaches a formyl group to the free amino group of methionyl-tRNA(fMet). The formyl group appears to play a dual role in the initiator identity of N-formylmethionyl-tRNA by promoting its recognition by IF2 and preventing the misappropriation of this tRNA by the elongation apparatus. This is Methionyl-tRNA formyltransferase from Clavibacter sepedonicus (Clavibacter michiganensis subsp. sepedonicus).